Reading from the N-terminus, the 258-residue chain is 4-hydroxy-tetrahydrodipicolinate reductase (258 aa).

10-15 contributes to the NAD(+) binding site; sequence GCLGRM. Lys-38 serves as a coordination point for NADP(+). NAD(+) is bound by residues 89–91 and 113–116; these read GTT and AGNM. The active-site Proton donor/acceptor is the His-146. His-147 serves as a coordination point for (S)-2,3,4,5-tetrahydrodipicolinate. The Proton donor role is filled by Lys-150. 156–157 contacts (S)-2,3,4,5-tetrahydrodipicolinate; the sequence is GT.

This sequence belongs to the DapB family.

Its subcellular location is the cytoplasm. The enzyme catalyses (S)-2,3,4,5-tetrahydrodipicolinate + NAD(+) + H2O = (2S,4S)-4-hydroxy-2,3,4,5-tetrahydrodipicolinate + NADH + H(+). It catalyses the reaction (S)-2,3,4,5-tetrahydrodipicolinate + NADP(+) + H2O = (2S,4S)-4-hydroxy-2,3,4,5-tetrahydrodipicolinate + NADPH + H(+). Its pathway is amino-acid biosynthesis; L-lysine biosynthesis via DAP pathway; (S)-tetrahydrodipicolinate from L-aspartate: step 4/4. Its function is as follows. Catalyzes the conversion of 4-hydroxy-tetrahydrodipicolinate (HTPA) to tetrahydrodipicolinate. This is 4-hydroxy-tetrahydrodipicolinate reductase from Pelagibacter ubique (strain HTCC1062).